The following is a 359-amino-acid chain: Src kinase-associated phosphoprotein 1 (359 aa).

Residues 107–210 (NVIKQGYLEK…WVDQISFLLK (104 aa)) form the PH domain. 3 positions are modified to phosphotyrosine: tyrosine 142, tyrosine 219, and tyrosine 232. Acidic residues predominate over residues 219-237 (YEEDEEEEEKEETYDDIDG). The disordered stretch occupies residues 219–239 (YEEDEEEEEKEETYDDIDGFD). Phosphotyrosine; by FYN occurs at positions 271 and 295. The tract at residues 290–295 (RKGVDY) is interaction with FYB1. Residues 294-355 (DYASYYQGLW…PKEYLTTAFE (62 aa)) enclose the SH3 domain.

This sequence belongs to the SKAP family. Homodimer. Interacts with FYN. Interacts with PTPRC. Interacts with GRB2 when phosphorylated on Tyr-271. Interacts with FYB1, which is required for SKAP2 protein stability. Part of a complex consisting of SKAP1, FYB1 and CLNK. Interacts with RASGRP1. Interacts with FYB2. In terms of processing, phosphorylated on tyrosines. Phosphorylation by FYN on Tyr-271 is required for GRB2 interaction. Phosphorylation by FYN on Tyr-295 abolishes interaction with FYB1. Tyr-232 is dephosphorylated by PTPRC. As to expression, highly expressed in thymocytes and peripheral blood lymphocytes. Also expressed in spleen cells and testis. Present in T-cells (at protein level).

Its subcellular location is the cytoplasm. The protein resides in the nucleus. The protein localises to the cell membrane. Positively regulates T-cell receptor signaling by enhancing the MAP kinase pathway. Required for optimal conjugation between T-cells and antigen-presenting cells by promoting the clustering of integrin ITGAL on the surface of T-cells. May be involved in high affinity immunoglobulin epsilon receptor signaling in mast cells. In Homo sapiens (Human), this protein is Src kinase-associated phosphoprotein 1 (SKAP1).